The following is a 138-amino-acid chain: Ribulose bisphosphate carboxylase small subunit (138 aa).

Belongs to the RuBisCO small chain family. As to quaternary structure, heterohexadecamer of 8 large and 8 small subunits.

The protein localises to the plastid. It is found in the chloroplast. RuBisCO catalyzes two reactions: the carboxylation of D-ribulose 1,5-bisphosphate, the primary event in carbon dioxide fixation, as well as the oxidative fragmentation of the pentose substrate in the photorespiration process. Both reactions occur simultaneously and in competition at the same active site. Although the small subunit is not catalytic it is essential for maximal activity. In Pyropia dentata (Red alga), this protein is Ribulose bisphosphate carboxylase small subunit.